The chain runs to 482 residues: MLHLSEFSGPDALLVKSTEGCCSEPSTDLTRLPARDPPAATGYPAGDFLSWALSSCGAGEYLTDSCLLEGPAPTPPPGLGYSGSFFIQAVPEHPHDPEALFNLMSGILGLTPFPGAEAAASRSPLDASFPAGSDALLPGPPDLFSPDPGAAAFPEAFWEASPSAGAPSQCLYEPHLSAPDVKPGLRAPPASPALDTASAFKGPYSPWELLSAGAPGSCGSQGGYQAAPEARFPTTGAKIEDLLSISCPAELPGGPASRLYTMGTYDAFPLAPGDLGEGAESLPGLLTPPSGEGGSSGEGGEFLDGTQPELSPLGLRSATADLPKPLVADIPGSSAVPEPPVPPPAPFPPAKARRKGRRGGKCSARCFCPRPHAKAFACPVESCVRSFARSDELNRHLRIHTGHKPFQCRICLRNFSRSDHLTTHVRTHTGEKPFACDVCGRRFARSDEKKRHSKVHLKQKARAEERLKGLGFYSLGLSFAAL.

Positions 274-357 (DLGEGAESLP…PPAKARRKGR (84 aa)) are disordered. Residues 280–290 (ESLPGLLTPPS) show a composition bias toward low complexity. A compositionally biased stretch (gly residues) spans 291 to 302 (GEGGSSGEGGEF). Residues 337 to 349 (PEPPVPPPAPFPP) are compositionally biased toward pro residues. 3 C2H2-type zinc fingers span residues 376–400 (FACP…LRIH), 406–428 (FQCR…VRTH), and 434–456 (FACD…SKVH).

The protein belongs to the EGR C2H2-type zinc-finger protein family. Expressed in brain. In the cerebellum and frontal cortex.

Its subcellular location is the nucleus. In terms of biological role, transcriptional regulator. Recognizes and binds to the DNA sequence 5'-GCGGGGGCG-3' (GSG). Activates the transcription of target genes whose products are required for mitogenesis and differentiation. This is Early growth response protein 4 (EGR4) from Bos taurus (Bovine).